The chain runs to 294 residues: Bifunctional protein FolD 1 (294 aa).

Residues 165–167 (GRS), serine 190, and threonine 231 each bind NADP(+).

Belongs to the tetrahydrofolate dehydrogenase/cyclohydrolase family. In terms of assembly, homodimer.

It catalyses the reaction (6R)-5,10-methylene-5,6,7,8-tetrahydrofolate + NADP(+) = (6R)-5,10-methenyltetrahydrofolate + NADPH. The enzyme catalyses (6R)-5,10-methenyltetrahydrofolate + H2O = (6R)-10-formyltetrahydrofolate + H(+). It participates in one-carbon metabolism; tetrahydrofolate interconversion. Functionally, catalyzes the oxidation of 5,10-methylenetetrahydrofolate to 5,10-methenyltetrahydrofolate and then the hydrolysis of 5,10-methenyltetrahydrofolate to 10-formyltetrahydrofolate. This chain is Bifunctional protein FolD 1, found in Paenarthrobacter aurescens (strain TC1).